The following is a 23-amino-acid chain: Hongotoxin-4 (23 aa).

Belongs to the short scorpion toxin superfamily. Potassium channel inhibitor family. Alpha-KTx 02 subfamily. In terms of tissue distribution, expressed by the venom gland.

Its subcellular location is the secreted. Its function is as follows. Potent selective inhibitor of Kv1/KCNA voltage-gated potassium channels. This is Hongotoxin-4 from Centruroides limbatus (Bark scorpion).